A 479-amino-acid chain; its full sequence is GTPase Obg (479 aa).

Residues 2–159 form the Obg domain; it reads PRFVDRVVIH…RDLTLELKTV (158 aa). The 181-residue stretch at 160 to 340 folds into the OBG-type G domain; it reads ADVGLVGFPS…LIFGLSQMIS (181 aa). GTP is bound by residues 166 to 173, 191 to 195, 212 to 215, 292 to 295, and 321 to 323; these read GFPSAGKS, FTTLV, DVPG, NKID, and STA. Mg(2+)-binding residues include Ser173 and Thr193. An OCT domain is found at 358–436; that stretch reads PIPVDDSGFT…IGEMTFDWEP (79 aa). The disordered stretch occupies residues 434–479; that stretch reads WEPQTPAGEPVAMSGRGTDPRLDSNKRVGAAERKAARSRRREHGDG. Over residues 451-468 the composition is skewed to basic and acidic residues; the sequence is TDPRLDSNKRVGAAERKA. Positions 469-479 are enriched in basic residues; the sequence is ARSRRREHGDG.

The protein belongs to the TRAFAC class OBG-HflX-like GTPase superfamily. OBG GTPase family. In terms of assembly, monomer. It depends on Mg(2+) as a cofactor.

It localises to the cytoplasm. An essential GTPase which binds GTP, GDP and possibly (p)ppGpp with moderate affinity, with high nucleotide exchange rates and a fairly low GTP hydrolysis rate. Plays a role in control of the cell cycle, stress response, ribosome biogenesis and in those bacteria that undergo differentiation, in morphogenesis control. This Mycobacterium tuberculosis (strain ATCC 25177 / H37Ra) protein is GTPase Obg.